Reading from the N-terminus, the 193-residue chain is NADH-quinone oxidoreductase subunit B (193 aa).

Positions 49, 50, 115, and 144 each coordinate [4Fe-4S] cluster. The interval 172–193 (FKKEEPREANAPVPVNTEMPLE) is disordered.

Belongs to the complex I 20 kDa subunit family. In terms of assembly, NDH-1 is composed of 14 different subunits. Subunits NuoB, C, D, E, F, and G constitute the peripheral sector of the complex. It depends on [4Fe-4S] cluster as a cofactor.

It is found in the cell inner membrane. It carries out the reaction a quinone + NADH + 5 H(+)(in) = a quinol + NAD(+) + 4 H(+)(out). Functionally, NDH-1 shuttles electrons from NADH, via FMN and iron-sulfur (Fe-S) centers, to quinones in the respiratory chain. The immediate electron acceptor for the enzyme in this species is believed to be ubiquinone. Couples the redox reaction to proton translocation (for every two electrons transferred, four hydrogen ions are translocated across the cytoplasmic membrane), and thus conserves the redox energy in a proton gradient. The chain is NADH-quinone oxidoreductase subunit B from Akkermansia muciniphila (strain ATCC BAA-835 / DSM 22959 / JCM 33894 / BCRC 81048 / CCUG 64013 / CIP 107961 / Muc).